The primary structure comprises 221 residues: GTP-binding nuclear protein Ran-2 (221 aa).

The Small GTPase Ran-type domain maps to 10–174 (DYPSFKLVIV…LYLARKLAGD (165 aa)). A GTP-binding site is contributed by 21–28 (DGGTGKTT). Residues 40–48 (KKYEPTIGV) are switch-I. GTP is bound by residues glycine 71, 125-128 (NKVD), and 153-155 (SAK). The segment at 71–87 (GQEKFGGLRDGYYIHGQ) is switch-II. The segment covering 202 to 212 (ADLAAAAAQPL) has biased composition (low complexity). A disordered region spans residues 202–221 (ADLAAAAAQPLPDDDDDAFE).

The protein belongs to the small GTPase superfamily. Ran family. As to quaternary structure, found in a nuclear export complex with RanGTP, exportin and pre-miRNA. Interacts with RanBP1a and RanBP1b. Interacts with PHRIP1. Interacts with KPNB1. Binds to PHIP1.

The protein localises to the nucleus. The protein resides in the nucleus envelope. In terms of biological role, GTP-binding protein involved in nucleocytoplasmic transport. Required for the import of protein into the nucleus and also for RNA export. Involved in chromatin condensation and control of cell cycle. The protein is GTP-binding nuclear protein Ran-2 of Arabidopsis thaliana (Mouse-ear cress).